The chain runs to 590 residues: Putative sodium/calcium exchanger 6 (590 aa).

The first 19 residues, 1 to 19 (MRIHFFAFLIILSLVGCDG), serve as a signal peptide directing secretion. 11 consecutive transmembrane segments (helical) span residues 97-117 (IILI…VSSA), 139-159 (VAGV…GAIA), 173-193 (LGEL…VTIF), 208-228 (IAFY…YDHV), 230-250 (IWMP…VILS), 368-388 (PITL…IQVC), 397-417 (PGLW…VLFF), 440-460 (IAWI…LGVV), 499-519 (AAAI…PFTI), 535-555 (YRLL…AMFA), and 568-588 (LVFI…DILV).

This sequence belongs to the Ca(2+):cation antiporter (CaCA) (TC 2.A.19) family.

The protein resides in the membrane. The chain is Putative sodium/calcium exchanger 6 (ncx-6) from Caenorhabditis elegans.